Consider the following 83-residue polypeptide: Conotoxin Pu6.1 (83 aa).

A signal peptide spans 1–19; sequence MKLVLAIVLILMLVSLSTG. A propeptide spanning residues 20 to 42 is cleaved from the precursor; sequence AEESGQEISMVGPPLYIWDPIPP. Disulfide bonds link C43/C57, C50/C62, and C56/C78.

This sequence belongs to the conotoxin I3 superfamily. Expressed by the venom duct.

The protein localises to the secreted. This Conus pulicarius (Flea-bitten cone) protein is Conotoxin Pu6.1.